A 507-amino-acid polypeptide reads, in one-letter code: (6-4) photolyase (507 aa).

6,7-dimethyl-8-(1-D-ribityl)lumazine is bound by residues 9–10 (GD), 32–40 (CEVMAEASY), and Gly-105. FAD contacts are provided by residues 265 to 269 (HSLLS) and Asn-273. Position 350 (Cys-350) interacts with [4Fe-4S] cluster. FAD is bound by residues 363–366 (YAHH), Asp-397, and Asn-406. 3 residues coordinate [4Fe-4S] cluster: Cys-438, Cys-441, and Cys-454.

This sequence belongs to the iron-sulfur bacterial cryptochrome/photolyase (FeS-BCP) family. FAD is required as a cofactor. 6,7-dimethyl-8-(1-D-ribityl)lumazine serves as cofactor. Requires [4Fe-4S] cluster as cofactor.

The catalysed reaction is (6-4) photoproduct (in DNA) = 2 pyrimidine residues (in DNA).. Photolyase involved in the repair of UV-induced (6-4) lesions in DNA. Catalyzes the photoreactivation of (6-4) pyrimidine-pyrimidone photoproducts by using blue-light energy. Can repair (6-4) photoproducts in ssDNA as well as in dsDNA. The protein is (6-4) photolyase of Agrobacterium fabrum (strain C58 / ATCC 33970) (Agrobacterium tumefaciens (strain C58)).